The sequence spans 599 residues: MTISASDYRHPGNFLKRTTALLCVGTALTALAFNASAACTYTIDSEWSTGFTANITLKNDTGAAINNWNVNWQYSSNRMTSGWNANFSGTNPYNATNMSWNGSIAPGQSISFGLQGEKNGSTAERPTVTGAACNSATTSSVASSSSTPTTSSSSASSVASALLLQEAQAGFCRVDGTIDNNHTGFTGSGFANTNNAQGAAVVWAIDATSSGRRTLTIRYANGGTANRNGSLVINGGSNGNYTVSLPTTGAWTTWQTATIDVDLVQGNNIVQLSATTAEGLPNIDSLSVVGGTVRAGNCGSVSSSSSVQSSSSSSSSSAASAKKFIGNITTSGAVRSDFTRYWNQITPENESKWGSVEGTRNVYNWAPLDRIYAYARQNNIPVKAHTFVWGAQSPSWLNNLSGPEVAVEIEQWIRDYCARYPDTAMIDVVNEAVPGHQPAGYAQRAFGNNWIQRVFQLARQYCPNSILILNDYNNIRWQHNEFIALAKAQGNYIDAVGLQAHELKGMTAAQVKTAIDNIWNQVGKPIYISEYDIGDTNDQVQLQNFQAHFPVFYNHPHVHGITLWGYVVGRTWIEGSGLIQDNGTPRPAMTWLINNYLNQ.

A signal peptide spans 1 to 37 (MTISASDYRHPGNFLKRTTALLCVGTALTALAFNASA). One can recognise a CBM2 domain in the interval 38 to 136 (ACTYTIDSEW…TVTGAACNSA (99 aa)). Cys-39 and Cys-133 are joined by a disulfide. A CBM6 domain is found at 163–289 (LLQEAQAGFC…LPNIDSLSVV (127 aa)). The 281-residue stretch at 315 to 595 (SSSAASAKKF…RPAMTWLINN (281 aa)) folds into the GH10 domain. The active-site Proton donor is Glu-431. Glu-530 serves as the catalytic Nucleophile.

This sequence belongs to the glycosyl hydrolase 10 (cellulase F) family.

It catalyses the reaction Endohydrolysis of (1-&gt;4)-beta-D-xylosidic linkages in xylans.. Its pathway is glycan metabolism; hemicellulose degradation. Its function is as follows. Xylanase B contributes to hydrolyze hemicellulose, the major component of plant cell-walls. This is Endo-1,4-beta-xylanase B (xynB) from Cellvibrio japonicus (strain Ueda107) (Pseudomonas fluorescens subsp. cellulosa).